Consider the following 447-residue polypeptide: Gamma-glutamyl phosphate reductase (447 aa).

The protein belongs to the gamma-glutamyl phosphate reductase family.

Its subcellular location is the cytoplasm. The catalysed reaction is L-glutamate 5-semialdehyde + phosphate + NADP(+) = L-glutamyl 5-phosphate + NADPH + H(+). Its pathway is amino-acid biosynthesis; L-proline biosynthesis; L-glutamate 5-semialdehyde from L-glutamate: step 2/2. Catalyzes the NADPH-dependent reduction of L-glutamate 5-phosphate into L-glutamate 5-semialdehyde and phosphate. The product spontaneously undergoes cyclization to form 1-pyrroline-5-carboxylate. The sequence is that of Gamma-glutamyl phosphate reductase from Methanosarcina acetivorans (strain ATCC 35395 / DSM 2834 / JCM 12185 / C2A).